Consider the following 161-residue polypeptide: Ragulator complex protein LAMTOR1 (161 aa).

Positions 1–43 are disordered; the sequence is MGCCYSSENEDSDQDREERKLLLDPSSPPTKALNGAEPNYHSL. Glycine 2 carries the N-myristoyl glycine lipid modification. Residues cysteine 3 and cysteine 4 are each lipidated (S-palmitoyl cysteine). Residue lysine 20 forms a Glycyl lysine isopeptide (Lys-Gly) (interchain with G-Cter in ubiquitin) linkage. Serine 27 carries the post-translational modification Phosphoserine. Lysine 31 participates in a covalent cross-link: Glycyl lysine isopeptide (Lys-Gly) (interchain with G-Cter in ubiquitin). A phosphoserine mark is found at serine 42 and serine 56. A Glycyl lysine isopeptide (Lys-Gly) (interchain with G-Cter in ubiquitin) cross-link involves residue lysine 60. Residue serine 98 is modified to Phosphoserine. Glycyl lysine isopeptide (Lys-Gly) (interchain with G-Cter in ubiquitin) cross-links involve residues lysine 103 and lysine 104. The tract at residues 121–161 is interaction with LAMTOR2 and LAMTOR3; that stretch reads SEPIPFSDLQQVSRIAAYAYSALSQIRVDAKEELVVQFGIP. Serine 141 is modified (phosphoserine).

It belongs to the LAMTOR1 family. Part of the Ragulator complex composed of LAMTOR1, LAMTOR2, LAMTOR3, LAMTOR4 and LAMTOR5. LAMTOR4 and LAMTOR5 form a heterodimer that interacts, through LAMTOR1, with a LAMTOR2, LAMTOR3 heterodimer. Interacts with LAMTOR2 and LAMTOR3; the interaction is direct. The Ragulator complex interacts with both the mTORC1 complex and heterodimers constituted of the Rag GTPases RagA/RRAGA, RagB/RRAGB, RagC/RRAGC and RagD/RRAGD; regulated by amino acid availability. The Ragulator complex interacts with SLC38A9; the probable amino acid sensor. Component of the lysosomal folliculin complex (LFC), composed of FLCN, FNIP1 (or FNIP2), RagA/RRAGA or RagB/RRAGB GDP-bound, RagC/RRAGC or RagD/RRAGD GTP-bound, and Ragulator. Associates with the lysosomal V-ATPase complex; interaction promotes the guanine nucleotide exchange factor (GEF) of the Ragulator complex. Interacts with MMP14. Interacts with CDKN1B; prevents the interaction of CDKN1B with RHOA leaving RHOA in a form accessible to activation by ARHGEF2. Interacts with PIP4P1. In terms of processing, N-terminal myristoylation and palmitoylation mediates its recruitment to lysosome membranes, thereby promoting localization of the Ragulator complex to lysosomes. N-myristoylation by NMT1 is required for palmitoylation at Cys-3 and Cys-4. May be palmitoylated by ZDHHC3. Ubiquitinated at Lys-60, Lys-103 and Lys-104 by UBE3A, promoting its degradation by the proteasome. Ubiquitination at Lys-20 impairs the association with the lysosomal V-ATPase complex. Deubiquitination at Lys-20 by USP32 promotes the association with the lysosomal V-ATPase complex and subsequent activation of the mTORC1 complex.

It is found in the lysosome membrane. It localises to the late endosome membrane. Its function is as follows. Key component of the Ragulator complex, a multiprotein complex involved in amino acid sensing and activation of mTORC1, a signaling complex promoting cell growth in response to growth factors, energy levels, and amino acids. Activated by amino acids through a mechanism involving the lysosomal V-ATPase, the Ragulator plays a dual role for the small GTPases Rag (RagA/RRAGA, RagB/RRAGB, RagC/RRAGC and/or RagD/RRAGD): it (1) acts as a guanine nucleotide exchange factor (GEF), activating the small GTPases Rag and (2) mediates recruitment of Rag GTPases to the lysosome membrane. Activated Ragulator and Rag GTPases function as a scaffold recruiting mTORC1 to lysosomes where it is in turn activated. LAMTOR1 is directly responsible for anchoring the Ragulator complex to the lysosomal membrane. LAMTOR1 wraps around the other subunits of the Ragulator complex to hold them in place and interacts with the Rag GTPases, thereby playing a key role in the recruitment of the mTORC1 complex to lysosomes. Also involved in the control of embryonic stem cells differentiation via non-canonical RagC/RRAGC and RagD/RRAGD activation: together with FLCN, it is necessary to recruit and activate RagC/RRAGC and RagD/RRAGD at the lysosomes, and to induce exit of embryonic stem cells from pluripotency via non-canonical, mTOR-independent TFE3 inactivation. Also required for late endosomes/lysosomes biogenesis it may regulate both the recycling of receptors through endosomes and the MAPK signaling pathway through recruitment of some of its components to late endosomes. May be involved in cholesterol homeostasis regulating LDL uptake and cholesterol release from late endosomes/lysosomes. May also play a role in RHOA activation. The protein is Ragulator complex protein LAMTOR1 of Homo sapiens (Human).